The chain runs to 311 residues: Methionyl-tRNA formyltransferase (311 aa).

Residue 109–112 (SLLP) participates in (6S)-5,6,7,8-tetrahydrofolate binding.

Belongs to the Fmt family.

It carries out the reaction L-methionyl-tRNA(fMet) + (6R)-10-formyltetrahydrofolate = N-formyl-L-methionyl-tRNA(fMet) + (6S)-5,6,7,8-tetrahydrofolate + H(+). In terms of biological role, attaches a formyl group to the free amino group of methionyl-tRNA(fMet). The formyl group appears to play a dual role in the initiator identity of N-formylmethionyl-tRNA by promoting its recognition by IF2 and preventing the misappropriation of this tRNA by the elongation apparatus. In Staphylococcus aureus (strain JH1), this protein is Methionyl-tRNA formyltransferase.